Consider the following 322-residue polypeptide: Acetyl-coenzyme A carboxylase carboxyl transferase subunit alpha (322 aa).

Residues R39–E293 form the CoA carboxyltransferase C-terminal domain.

The protein belongs to the AccA family. Acetyl-CoA carboxylase is a heterohexamer composed of biotin carboxyl carrier protein (AccB), biotin carboxylase (AccC) and two subunits each of ACCase subunit alpha (AccA) and ACCase subunit beta (AccD).

It localises to the cytoplasm. The catalysed reaction is N(6)-carboxybiotinyl-L-lysyl-[protein] + acetyl-CoA = N(6)-biotinyl-L-lysyl-[protein] + malonyl-CoA. It participates in lipid metabolism; malonyl-CoA biosynthesis; malonyl-CoA from acetyl-CoA: step 1/1. Functionally, component of the acetyl coenzyme A carboxylase (ACC) complex. First, biotin carboxylase catalyzes the carboxylation of biotin on its carrier protein (BCCP) and then the CO(2) group is transferred by the carboxyltransferase to acetyl-CoA to form malonyl-CoA. This is Acetyl-coenzyme A carboxylase carboxyl transferase subunit alpha from Thiobacillus denitrificans (strain ATCC 25259 / T1).